Consider the following 235-residue polypeptide: Thiamine-phosphate synthase (235 aa).

4-amino-2-methyl-5-(diphosphooxymethyl)pyrimidine contacts are provided by residues 50–54 (QLRDK) and asparagine 91. Mg(2+) is bound by residues aspartate 92 and aspartate 111. Serine 130 is a binding site for 4-amino-2-methyl-5-(diphosphooxymethyl)pyrimidine. 160–162 (TPT) lines the 2-[(2R,5Z)-2-carboxy-4-methylthiazol-5(2H)-ylidene]ethyl phosphate pocket. A 4-amino-2-methyl-5-(diphosphooxymethyl)pyrimidine-binding site is contributed by lysine 163. Residue glycine 191 participates in 2-[(2R,5Z)-2-carboxy-4-methylthiazol-5(2H)-ylidene]ethyl phosphate binding.

It belongs to the thiamine-phosphate synthase family. Mg(2+) is required as a cofactor.

It catalyses the reaction 2-[(2R,5Z)-2-carboxy-4-methylthiazol-5(2H)-ylidene]ethyl phosphate + 4-amino-2-methyl-5-(diphosphooxymethyl)pyrimidine + 2 H(+) = thiamine phosphate + CO2 + diphosphate. The catalysed reaction is 2-(2-carboxy-4-methylthiazol-5-yl)ethyl phosphate + 4-amino-2-methyl-5-(diphosphooxymethyl)pyrimidine + 2 H(+) = thiamine phosphate + CO2 + diphosphate. It carries out the reaction 4-methyl-5-(2-phosphooxyethyl)-thiazole + 4-amino-2-methyl-5-(diphosphooxymethyl)pyrimidine + H(+) = thiamine phosphate + diphosphate. It participates in cofactor biosynthesis; thiamine diphosphate biosynthesis; thiamine phosphate from 4-amino-2-methyl-5-diphosphomethylpyrimidine and 4-methyl-5-(2-phosphoethyl)-thiazole: step 1/1. Condenses 4-methyl-5-(beta-hydroxyethyl)thiazole monophosphate (THZ-P) and 2-methyl-4-amino-5-hydroxymethyl pyrimidine pyrophosphate (HMP-PP) to form thiamine monophosphate (TMP). The polypeptide is Thiamine-phosphate synthase (Mycobacterium leprae (strain TN)).